Consider the following 381-residue polypeptide: Secretion apparatus protein BsaZ (381 aa).

4 consecutive transmembrane segments (helical) span residues 28 to 48 (IVAL…VDLT), 80 to 100 (IAAP…LVQS), 134 to 154 (AVKA…FADL), and 175 to 195 (IVLT…VLIV). The interval 343–381 (NRGGPPREMPPEATHAPDAHGGDAASGGATSAQAGERNA) is disordered. A compositionally biased stretch (low complexity) spans 364–381 (GDAASGGATSAQAGERNA).

It belongs to the type III secretion exporter family.

Its subcellular location is the cell membrane. Part of the bsa type III secretion system, is involved in the intracellular replication of invading bacteria inside the host cell. Probably necessary for the lysis of the vacuole membrane and escape into the host cell cytoplasm. The chain is Secretion apparatus protein BsaZ (bsaZ) from Burkholderia thailandensis (strain ATCC 700388 / DSM 13276 / CCUG 48851 / CIP 106301 / E264).